Here is a 292-residue protein sequence, read N- to C-terminus: MAWLQLRINTSSEYAESVGDMLSANGSQAVTYVDAKDTPMYEPKPGEIMLWPDTQVVGLFEADADMKSILQRLGKAKVLGPDFKYKLEPLEDKDWEREWMDNFHPMQFGERLWICPSWRDVPDPDAVNVMLDPGLAFGTGTHPTTALCLRWLDGIDMAGKTVVDFGCGSGILALAALKLGAERVVGVDIDPQALQATKENARRNGVEDRLDVYLPQDQPELEADVVMANILSGPLLELQSVITNYCKSKGLLVLSGILAEQVSKIEDAYSQDIVLEPSAIDGEWARVSGSKR.

S-adenosyl-L-methionine is bound by residues Thr145, Gly166, Asp188, and Asn229.

This sequence belongs to the methyltransferase superfamily. PrmA family.

Its subcellular location is the cytoplasm. It carries out the reaction L-lysyl-[protein] + 3 S-adenosyl-L-methionine = N(6),N(6),N(6)-trimethyl-L-lysyl-[protein] + 3 S-adenosyl-L-homocysteine + 3 H(+). Functionally, methylates ribosomal protein L11. This Alteromonas mediterranea (strain DSM 17117 / CIP 110805 / LMG 28347 / Deep ecotype) protein is Ribosomal protein L11 methyltransferase.